The chain runs to 467 residues: Probable circularly permuted 1,3-beta-glucanase TOS1 (467 aa).

The first 21 residues, 1 to 21 (MKFSSTTLLAGLSSLTATVSA), serve as a signal peptide directing secretion. Residues 158-172 (PAVSSAAADDNANSG) show a composition bias toward low complexity. Disordered regions lie at residues 158–187 (PAVSSAAADDNANSGSGSGSSAGSGSGYGS) and 200–223 (SDISTKSAPTSTSAQPSSSETASV). A compositionally biased stretch (gly residues) spans 173–185 (SGSGSSAGSGSGY). Positions 203-222 (STKSAPTSTSAQPSSSETAS) are enriched in low complexity. The ExDxxE motif signature appears at 374–379 (ELDLFE). Residues 391-413 (HLHDGQGSSQNSNNGGGGSQDYF) form a disordered region.

Belongs to the PGA52 family. Cleaved by KEX2 in vitro.

The protein resides in the secreted. It carries out the reaction Hydrolysis of (1-&gt;3)-beta-D-glucosidic linkages in (1-&gt;3)-beta-D-glucans.. Functionally, probable circularly permuted 1,3-beta-glucanase involved in cell wall modification through beta-1,3-glucan network alterations such as increased branching or remodeling. Plays a role in engulfment by host macrophages. This chain is Probable circularly permuted 1,3-beta-glucanase TOS1, found in Candida albicans (strain SC5314 / ATCC MYA-2876) (Yeast).